The chain runs to 326 residues: NAD-dependent protein deacylase SIR5 (326 aa).

A mitochondrion-targeting transit peptide spans 1–26 (MRLLRPTPRLSSIFSSKTATSNLRFF). The 297-residue stretch at 28 to 324 (AMAPHNDVGA…IGKLETDKKE (297 aa)) folds into the Deacetylase sirtuin-type domain. 53 to 72 (GAGLSASSGLPTFRGAGGLW) serves as a coordination point for NAD(+). 2 residues coordinate substrate: Tyr-97 and Arg-100. His-151 acts as the Proton acceptor in catalysis. Cys-159, Cys-162, Cys-211, and Cys-214 together coordinate Zn(2+).

This sequence belongs to the sirtuin family. Class I subfamily. Interacts with LAT1; the interaction is direct. It depends on Zn(2+) as a cofactor.

The protein localises to the mitochondrion. It is found in the cytoplasm. It localises to the cytosol. Its subcellular location is the nucleus. The protein resides in the chromosome. It catalyses the reaction N(6)-acetyl-L-lysyl-[protein] + NAD(+) + H2O = 2''-O-acetyl-ADP-D-ribose + nicotinamide + L-lysyl-[protein]. The enzyme catalyses N(6)-(2E)-butenoyl-L-lysyl-[protein] + H2O = (2E)-2-butenoate + L-lysyl-[protein]. Functionally, NAD-dependent protein-lysine deacylase that decrotonylates the PDC (pyruvate dehydrogenase complex) subunit LAT1 at 'Lys-148' to inhibit PDC activity and consequently ATP production. Also decrotonylates histone H3 crotonylated at 'Lys-18' (H3K18cr), to repress the expression of genes involved in aerobic respiration. May also act as a NAD-dependent deacetylase. Does not mediate desuccinylation, demalonylation, or deglutarylation of LAT1. This is NAD-dependent protein deacylase SIR5 from Fusarium oxysporum f. sp. lycopersici (strain 4287 / CBS 123668 / FGSC 9935 / NRRL 34936) (Fusarium vascular wilt of tomato).